A 291-amino-acid polypeptide reads, in one-letter code: Cytochrome c-552 (291 aa).

A signal peptide spans 1 to 23 (MKKTLMASAVGAVIAFGTHGAMA). Heme c is bound by residues C68, C71, H72, C157, C161, and H162.

In terms of processing, binds 2 heme c groups per subunit.

It is found in the periplasm. In terms of biological role, may play a role in nitrite reduction. Shows peroxidase activity on proteolytic modification. This chain is Cytochrome c-552 (nirB), found in Stutzerimonas stutzeri (Pseudomonas stutzeri).